The following is a 78-amino-acid chain: Large ribosomal subunit protein uL24 (78 aa).

Positions 52–78 are disordered; that stretch reads PSEKTPNGGHVNKEMPIDISNVAKVEG.

It belongs to the universal ribosomal protein uL24 family. Part of the 50S ribosomal subunit.

One of two assembly initiator proteins, it binds directly to the 5'-end of the 23S rRNA, where it nucleates assembly of the 50S subunit. Functionally, one of the proteins that surrounds the polypeptide exit tunnel on the outside of the subunit. This chain is Large ribosomal subunit protein uL24, found in Campylobacter concisus (strain 13826).